The sequence spans 365 residues: tRNA/tmRNA (uracil-C(5))-methyltransferase (365 aa).

Gln189, Tyr217, Asn222, Glu238, and Asp298 together coordinate S-adenosyl-L-methionine. Cys323 (nucleophile) is an active-site residue. Glu357 functions as the Proton acceptor in the catalytic mechanism.

Belongs to the class I-like SAM-binding methyltransferase superfamily. RNA M5U methyltransferase family. TrmA subfamily.

It catalyses the reaction uridine(54) in tRNA + S-adenosyl-L-methionine = 5-methyluridine(54) in tRNA + S-adenosyl-L-homocysteine + H(+). The catalysed reaction is uridine(341) in tmRNA + S-adenosyl-L-methionine = 5-methyluridine(341) in tmRNA + S-adenosyl-L-homocysteine + H(+). Functionally, dual-specificity methyltransferase that catalyzes the formation of 5-methyluridine at position 54 (m5U54) in all tRNAs, and that of position 341 (m5U341) in tmRNA (transfer-mRNA). This chain is tRNA/tmRNA (uracil-C(5))-methyltransferase, found in Shewanella denitrificans (strain OS217 / ATCC BAA-1090 / DSM 15013).